The sequence spans 229 residues: Potassium/proton antiporter CemA (229 aa).

A run of 4 helical transmembrane segments spans residues 7-27, 114-134, 154-174, and 189-209; these read FTPLLYLASIVFLPWWISLSL, IICFVILSGYSILGNEELLIL, ILLLTDLCIGFHSPHGWELMI, and IISGLVSTFPVILDTILKYWI.

This sequence belongs to the CemA family.

The protein resides in the plastid. The protein localises to the chloroplast inner membrane. The enzyme catalyses K(+)(in) + H(+)(out) = K(+)(out) + H(+)(in). In terms of biological role, contributes to K(+)/H(+) antiport activity by supporting proton efflux to control proton extrusion and homeostasis in chloroplasts in a light-dependent manner to modulate photosynthesis. Prevents excessive induction of non-photochemical quenching (NPQ) under continuous-light conditions. Indirectly promotes efficient inorganic carbon uptake into chloroplasts. The sequence is that of Potassium/proton antiporter CemA from Vitis vinifera (Grape).